A 236-amino-acid chain; its full sequence is Purine nucleoside phosphorylase DeoD-type 2 (236 aa).

Histidine 5 is a binding site for a purine D-ribonucleoside. Phosphate is bound by residues glycine 21, arginine 25, arginine 44, and 88-91; that span reads RVGS. A purine D-ribonucleoside-binding positions include 180-182 and 204-205; these read DME and SD. Aspartate 205 acts as the Proton donor in catalysis.

Belongs to the PNP/UDP phosphorylase family. As to quaternary structure, homohexamer; trimer of homodimers.

It carries out the reaction a purine D-ribonucleoside + phosphate = a purine nucleobase + alpha-D-ribose 1-phosphate. It catalyses the reaction a purine 2'-deoxy-D-ribonucleoside + phosphate = a purine nucleobase + 2-deoxy-alpha-D-ribose 1-phosphate. Catalyzes the reversible phosphorolytic breakdown of the N-glycosidic bond in the beta-(deoxy)ribonucleoside molecules, with the formation of the corresponding free purine bases and pentose-1-phosphate. In Vibrio parahaemolyticus serotype O3:K6 (strain RIMD 2210633), this protein is Purine nucleoside phosphorylase DeoD-type 2.